The primary structure comprises 466 residues: Glucose-6-phosphate 1-dehydrogenase 1 (466 aa).

NADP(+) contacts are provided by residues serine 48, aspartate 88–valine 89, and lysine 141. Substrate is bound by residues histidine 171, lysine 175, glutamate 209, and aspartate 228. Histidine 233 acts as the Proton acceptor in catalysis. Residues lysine 319 and lysine 324 each contribute to the substrate site.

It belongs to the glucose-6-phosphate dehydrogenase family.

It catalyses the reaction D-glucose 6-phosphate + NADP(+) = 6-phospho-D-glucono-1,5-lactone + NADPH + H(+). Its pathway is carbohydrate degradation; pentose phosphate pathway; D-ribulose 5-phosphate from D-glucose 6-phosphate (oxidative stage): step 1/3. Its function is as follows. Catalyzes the oxidation of glucose 6-phosphate to 6-phosphogluconolactone. The protein is Glucose-6-phosphate 1-dehydrogenase 1 of Mycobacterium tuberculosis (strain CDC 1551 / Oshkosh).